Here is a 277-residue protein sequence, read N- to C-terminus: Chitosanase (277 aa).

Positions 1–35 are cleaved as a signal peptide; the sequence is MKISMQKADFWKKAAISLLVFTMFFTLMMSETVFA. The active-site Proton donor is the Glu54. The active-site Nucleophile is Asp70.

It belongs to the glycosyl hydrolase 46 family.

The protein resides in the secreted. The enzyme catalyses Endohydrolysis of beta-(1-&gt;4)-linkages between D-glucosamine residues in a partly acetylated chitosan.. Its function is as follows. Aids in the defense against invading fungal pathogens by degrading their cell wall chitosan. This Bacillus subtilis (strain 168) protein is Chitosanase (csn).